We begin with the raw amino-acid sequence, 359 residues long: MSDGAELKMAAQKRLLTGSDLDKWKASKTFEELLRFVSSLAQSVRGRENSEHAEPVSPAIEALEALLEEMQGIAAHHPVLQDAATSRFGKVEFRDFHKEVQARAEALVLQVDPSLTDEQAQELAVYLGNAWGDCKRIDYGSGHELNFVCFLYGLWKYGVLSEHDFTNAVLRVFVKYMDVMRVLETKYWLEPAGSHGVWGLDDYHFLPFLFGAFQLATHKHLKPKSIHNPEVVELFENRYLYFGCIAFINRVKTTASLRWHSPMLDDISGVRSWTKVSEGMVKMYKAEVLGKLPIMQHFFFSRFLPVPDGVSPPRTSEEELADCSEHAHSTWGDCCGIPIPSAVAASEATRKHSKPLPFD.

Belongs to the PTPA-type PPIase family.

The protein resides in the cytoplasm. It carries out the reaction [protein]-peptidylproline (omega=180) = [protein]-peptidylproline (omega=0). PPIases accelerate the folding of proteins. It catalyzes the cis-trans isomerization of proline imidic peptide bonds in oligopeptides. Acts as a regulatory subunit for PP2A-like phosphatases modulating their activity or substrate specificity, probably by inducing a conformational change in the catalytic subunit, a direct target of the PPIase. Can reactivate inactive phosphatase PP2A-phosphatase methylesterase complexes (PP2Ai) in presence of ATP and Mg(2+) by dissociating the inactive form from the complex. The protein is Serine/threonine-protein phosphatase 2A activator 2 (RRD2) of Eremothecium gossypii (strain ATCC 10895 / CBS 109.51 / FGSC 9923 / NRRL Y-1056) (Yeast).